A 449-amino-acid chain; its full sequence is MRLKFGKLIQALSPAQLIALYYFLAVTVAVILLSLPAAHKPGADWTFIDALFTAVSSVSVTGLTVVDTADTFSTIGIFILAFVLQFGGIGIMTLGTFIWLIMGKRIGLKERKLIMVDQNQSQFSGIVNLMKQVLFLILWIEFFGGLILGTYFLTYYDSYQEAYLHGFFASISATTNGGFDITGNSMIPFRHDYFVQFITMLLIIFGAIGFPVLVEVKDFLFSKHRRYPFTLFTKITTITFGSLVLFGAIGIFALEANHAFAGKSWHDILFLSLFQSTATRSGGLATIDISQLSDSTLFFICALMFIGASPSSVGGGIRTTTFALNLLALFHFARGNKAVKVFKRELHPADLMKSLVVTMMAILLVFGATLILTITEKHSLLELLFEVCSAFGTTGLSLGITADLSSVGKCVIMIVMFIGRIGILTFLYLIGRKEIEANYHYPKERVIIG.

The next 10 membrane-spanning stretches (helical) occupy residues 17 to 37 (LIALYYFLAVTVAVILLSLPA), 46 to 66 (TFIDALFTAVSSVSVTGLTVV), 75 to 95 (IGIFILAFVLQFGGIGIMTLG), 133 to 153 (VLFLILWIEFFGGLILGTYFL), 194 to 214 (FVQFITMLLIIFGAIGFPVLV), 235 to 255 (ITTITFGSLVLFGAIGIFALE), 297 to 317 (LFFICALMFIGASPSSVGGGI), 355 to 375 (LVVTMMAILLVFGATLILTIT), 380 to 400 (LLELLFEVCSAFGTTGLSLGI), and 411 to 431 (VIMIVMFIGRIGILTFLYLIG).

Belongs to the TrkH potassium transport family. Ktr (TC 2.A.38.4) subfamily. In terms of assembly, homodimer. Part of the KtrCD complex formed by an octameric catalytic ring of KtrC and a membrane associated dimer of KtrD forming a potassium channel.

Its subcellular location is the cell membrane. Integral membrane subunit of the KtrCD potassium uptake transporter. The 2 major potassium transporter complexes KtrAB and KtrCD confer resistance to both suddenly imposed and prolonged osmotic stress. This chain is Ktr system potassium uptake protein D (ktrD), found in Bacillus subtilis (strain 168).